Here is a 258-residue protein sequence, read N- to C-terminus: UPF0758 protein Bamb_2548 (258 aa).

The segment at 1 to 43 (MLSPCLAAPATECRDPADAPAAPARHTGPARPRKRRPRNWKPH) is disordered. Positions 31-43 (RPRKRRPRNWKPH) are enriched in basic residues. In terms of domain architecture, MPN spans 136-258 (QIDSPGAVED…TFSFARAGWL (123 aa)). Positions 207, 209, and 220 each coordinate Zn(2+). A JAMM motif motif is present at residues 207–220 (HNHPSGAVQPSAED).

Belongs to the UPF0758 family.

The chain is UPF0758 protein Bamb_2548 from Burkholderia ambifaria (strain ATCC BAA-244 / DSM 16087 / CCUG 44356 / LMG 19182 / AMMD) (Burkholderia cepacia (strain AMMD)).